We begin with the raw amino-acid sequence, 789 residues long: Ent-kaur-16-ene synthase, chloroplastic (789 aa).

5 residues coordinate Mg(2+): Asp536, Asp540, Asn680, Ser684, and Glu688. The short motif at 536–540 (DDFYD) is the DDXXD motif element.

The protein belongs to the terpene synthase family. Requires Mg(2+) as cofactor. Post-translationally, the N-terminus is blocked. Abundant in most tissues. Present in low amounts in mature cotyledons.

It localises to the plastid. It is found in the chloroplast. It carries out the reaction ent-copalyl diphosphate = ent-kaur-16-ene + diphosphate. It functions in the pathway plant hormone biosynthesis; gibberellin biosynthesis. In terms of biological role, catalyzes the conversion of ent-copalyl diphosphate to the gibberellin precursor ent-kaur-16-ene. This is Ent-kaur-16-ene synthase, chloroplastic from Cucurbita maxima (Pumpkin).